Here is a 171-residue protein sequence, read N- to C-terminus: S-ribosylhomocysteine lyase (171 aa).

The Fe cation site is built by histidine 54, histidine 58, and cysteine 128.

Belongs to the LuxS family. As to quaternary structure, homodimer. Requires Fe cation as cofactor.

The enzyme catalyses S-(5-deoxy-D-ribos-5-yl)-L-homocysteine = (S)-4,5-dihydroxypentane-2,3-dione + L-homocysteine. Involved in the synthesis of autoinducer 2 (AI-2) which is secreted by bacteria and is used to communicate both the cell density and the metabolic potential of the environment. The regulation of gene expression in response to changes in cell density is called quorum sensing. Catalyzes the transformation of S-ribosylhomocysteine (RHC) to homocysteine (HC) and 4,5-dihydroxy-2,3-pentadione (DPD). The chain is S-ribosylhomocysteine lyase from Campylobacter concisus (strain 13826).